Here is a 297-residue protein sequence, read N- to C-terminus: Probable endonuclease 4 (297 aa).

9 residues coordinate Zn(2+): histidine 69, histidine 110, glutamate 145, aspartate 179, histidine 182, histidine 214, aspartate 227, histidine 229, and glutamate 259.

This sequence belongs to the AP endonuclease 2 family. It depends on Zn(2+) as a cofactor.

The enzyme catalyses Endonucleolytic cleavage to 5'-phosphooligonucleotide end-products.. Functionally, endonuclease IV plays a role in DNA repair. It cleaves phosphodiester bonds at apurinic or apyrimidinic (AP) sites, generating a 3'-hydroxyl group and a 5'-terminal sugar phosphate. This is Probable endonuclease 4 from Bacillus subtilis (strain 168).